The following is a 460-amino-acid chain: ATP synthase subunit beta (460 aa).

150–157 serves as a coordination point for ATP; sequence GGAGVGKT.

This sequence belongs to the ATPase alpha/beta chains family. F-type ATPases have 2 components, CF(1) - the catalytic core - and CF(0) - the membrane proton channel. CF(1) has five subunits: alpha(3), beta(3), gamma(1), delta(1), epsilon(1). CF(0) has three main subunits: a(1), b(2) and c(9-12). The alpha and beta chains form an alternating ring which encloses part of the gamma chain. CF(1) is attached to CF(0) by a central stalk formed by the gamma and epsilon chains, while a peripheral stalk is formed by the delta and b chains.

It localises to the cell inner membrane. The enzyme catalyses ATP + H2O + 4 H(+)(in) = ADP + phosphate + 5 H(+)(out). In terms of biological role, produces ATP from ADP in the presence of a proton gradient across the membrane. The catalytic sites are hosted primarily by the beta subunits. This chain is ATP synthase subunit beta, found in Photorhabdus laumondii subsp. laumondii (strain DSM 15139 / CIP 105565 / TT01) (Photorhabdus luminescens subsp. laumondii).